The following is a 443-amino-acid chain: Carboxypeptidase M (443 aa).

The first 17 residues, 1–17, serve as a signal peptide directing secretion; that stretch reads MDRARLWLGLLLPVVAA. The region spanning 21 to 311 is the Peptidase M14 domain; the sequence is RYHHQEGMEA…ASLIEYIKQV (291 aa). An N-linked (GlcNAc...) asparagine glycan is attached at N38. Positions 83 and 86 each coordinate Zn(2+). 3 disulfide bridges follow: C138-C285, C242-C284, and C341-C410. Residue N164 is glycosylated (N-linked (GlcNAc...) asparagine). A Zn(2+)-binding site is contributed by H190. E281 serves as the catalytic Proton donor/acceptor. An N-linked (GlcNAc...) asparagine glycan is attached at N363. Residue S423 is the site of GPI-anchor amidated serine attachment. Positions 424–443 are cleaved as a propeptide — removed in mature form; it reads AATKPSLGVFFMTLLYVFFK.

Belongs to the peptidase M14 family. Zn(2+) serves as cofactor.

Its subcellular location is the cell membrane. It carries out the reaction Cleavage of C-terminal arginine or lysine residues from polypeptides.. Specifically removes C-terminal basic residues (Arg or Lys) from peptides and proteins. It is believed to play important roles in the control of peptide hormone and growth factor activity at the cell surface, and in the membrane-localized degradation of extracellular proteins. The sequence is that of Carboxypeptidase M (Cpm) from Mus musculus (Mouse).